Reading from the N-terminus, the 196-residue chain is Imidazoleglycerol-phosphate dehydratase (196 aa).

It belongs to the imidazoleglycerol-phosphate dehydratase family.

Its subcellular location is the cytoplasm. The catalysed reaction is D-erythro-1-(imidazol-4-yl)glycerol 3-phosphate = 3-(imidazol-4-yl)-2-oxopropyl phosphate + H2O. The protein operates within amino-acid biosynthesis; L-histidine biosynthesis; L-histidine from 5-phospho-alpha-D-ribose 1-diphosphate: step 6/9. The sequence is that of Imidazoleglycerol-phosphate dehydratase from Granulibacter bethesdensis (strain ATCC BAA-1260 / CGDNIH1).